A 229-amino-acid polypeptide reads, in one-letter code: DNA mismatch repair protein MutH (229 aa).

The protein belongs to the MutH family.

The protein resides in the cytoplasm. Sequence-specific endonuclease that cleaves unmethylated GATC sequences. It is involved in DNA mismatch repair. This is DNA mismatch repair protein MutH from Escherichia coli (strain SMS-3-5 / SECEC).